The primary structure comprises 474 residues: tRNA-2-methylthio-N(6)-dimethylallyladenosine synthase (474 aa).

In terms of domain architecture, MTTase N-terminal spans lysine 3–glutamate 120. 6 residues coordinate [4Fe-4S] cluster: cysteine 12, cysteine 49, cysteine 83, cysteine 157, cysteine 161, and cysteine 164. The 233-residue stretch at arginine 143–glutamate 375 folds into the Radical SAM core domain. In terms of domain architecture, TRAM spans arginine 378–arginine 441.

The protein belongs to the methylthiotransferase family. MiaB subfamily. Monomer. It depends on [4Fe-4S] cluster as a cofactor.

It is found in the cytoplasm. It carries out the reaction N(6)-dimethylallyladenosine(37) in tRNA + (sulfur carrier)-SH + AH2 + 2 S-adenosyl-L-methionine = 2-methylsulfanyl-N(6)-dimethylallyladenosine(37) in tRNA + (sulfur carrier)-H + 5'-deoxyadenosine + L-methionine + A + S-adenosyl-L-homocysteine + 2 H(+). Catalyzes the methylthiolation of N6-(dimethylallyl)adenosine (i(6)A), leading to the formation of 2-methylthio-N6-(dimethylallyl)adenosine (ms(2)i(6)A) at position 37 in tRNAs that read codons beginning with uridine. The sequence is that of tRNA-2-methylthio-N(6)-dimethylallyladenosine synthase from Yersinia pseudotuberculosis serotype O:3 (strain YPIII).